The following is a 247-amino-acid chain: Cell division protein ZapD (247 aa).

The protein belongs to the ZapD family. Interacts with FtsZ.

The protein localises to the cytoplasm. In terms of biological role, cell division factor that enhances FtsZ-ring assembly. Directly interacts with FtsZ and promotes bundling of FtsZ protofilaments, with a reduction in FtsZ GTPase activity. This Escherichia coli O7:K1 (strain IAI39 / ExPEC) protein is Cell division protein ZapD.